The sequence spans 637 residues: MIKITLKDGKVLEVEKGLTVSEIAARISTSLRKKALGAKINGEKAELMDVINEDSTLEILTFEDQEGKDTLRHTASHILAQAVKRLYPEVKLAIGPSIENGFYYDFDAEFSFTPEILEKIEKEMNKIVKENLQLKKFTKSREDAINFMKERNEDYKVELIEDLPEESIISFYEQGDFVDLCAGPHVPSTKEVKAIKLLSVAGAYWRGNENNKMLQRIYGTAFTKKAELEEYLHMLEEAKKRDHRKLGKELGLFDLKEEGPGFPFFYPKGMILRNTLENYWREMHEKAGYGEIRTPIILNEKLWHQSGHWDHYKENMYFTKIDGEDYAIKPMNCPGSILVYKSDLHSYRELPIRLGELGLVHRHEYSGALHGLMRVRNFTQDDAHIFMTKEQITSEILGVIKMIDNFYSLFGFEYFVELSTRPEDSMGSDEDWEAATNGLIKALNEAGLEYKINEGDGAFYGPKIDFHLRDCLGRTWQCGTIQLDFQMPERFDLSYVGADGEKHRPVMAHRVIFGSIERFIGILTEHYAGAFPTWLAPVQVKIMNITDNQVEYCKEIQKVLNENGIRVELDLRNEKIGYKIREAQLQKIPYMLVLGDKEMNEKTIAVRARKQGDLGAMNLTDFVAMVKKEIEEKTNCL.

Residues 1-61 (MIKITLKDGK…NEDSTLEILT (61 aa)) enclose the TGS domain. Residues 242–532 (DHRKLGKELG…LTEHYAGAFP (291 aa)) form a catalytic region. Residues Cys333, His384, and His509 each contribute to the Zn(2+) site.

This sequence belongs to the class-II aminoacyl-tRNA synthetase family. In terms of assembly, homodimer. Zn(2+) is required as a cofactor.

It localises to the cytoplasm. It carries out the reaction tRNA(Thr) + L-threonine + ATP = L-threonyl-tRNA(Thr) + AMP + diphosphate + H(+). In terms of biological role, catalyzes the attachment of threonine to tRNA(Thr) in a two-step reaction: L-threonine is first activated by ATP to form Thr-AMP and then transferred to the acceptor end of tRNA(Thr). Also edits incorrectly charged L-seryl-tRNA(Thr). This is Threonine--tRNA ligase from Clostridium novyi (strain NT).